Reading from the N-terminus, the 92-residue chain is Small ribosomal subunit protein uS19 (92 aa).

This sequence belongs to the universal ribosomal protein uS19 family.

Its function is as follows. Protein S19 forms a complex with S13 that binds strongly to the 16S ribosomal RNA. In Rhodopseudomonas palustris (strain HaA2), this protein is Small ribosomal subunit protein uS19.